The following is an 866-amino-acid chain: Sphingomyelin phosphodiesterase 4 (866 aa).

2 positions are modified to phosphoserine: Ser169 and Ser285. Position 708 is a phosphothreonine (Thr708). The residue at position 792 (Ser792) is a Phosphoserine. The helical transmembrane segment at Leu822–Leu842 threads the bilayer.

Requires Mg(2+) as cofactor. Widely expressed, with highest levels in heart and skeletal muscle. As to expression, expressed in skeletal muscle (at protein level). In terms of tissue distribution, expressed in skeletal muscle but a lower levels than isoform 1 (at protein level).

The protein localises to the endoplasmic reticulum membrane. The protein resides in the golgi apparatus membrane. It localises to the nucleus envelope. It is found in the cell membrane. Its subcellular location is the sarcolemma. The enzyme catalyses a sphingomyelin + H2O = phosphocholine + an N-acylsphing-4-enine + H(+). With respect to regulation, activated by phosphatidylserine and tumor necrosis factor (TNF). Inhibited by scyphostatin. Functionally, catalyzes the hydrolysis of membrane sphingomyelin to form phosphorylcholine and ceramide. It has a relevant role in the homeostasis of membrane sphingolipids, thereby influencing membrane integrity, and endoplasmic reticulum organization and function. May sensitize cells to DNA damage-induced apoptosis. In skeletal muscle, mediates TNF-stimulated oxidant production. The protein is Sphingomyelin phosphodiesterase 4 of Homo sapiens (Human).